Reading from the N-terminus, the 95-residue chain is DNA-binding protein CENSYa_1764 (95 aa).

Residues 1 to 21 are disordered; sequence MSYTDPDDSLPEHVPGEAEMS.

This sequence belongs to the PDCD5 family.

This Cenarchaeum symbiosum (strain A) protein is DNA-binding protein CENSYa_1764.